The primary structure comprises 736 residues: Dimethylamine dehydrogenase (736 aa).

Cysteine 31 is subject to S-6-FMN cysteine. 176–179 (YGAH) contacts substrate. Catalysis depends on tyrosine 181, which acts as the Proton donor. Arginine 229 and arginine 329 together coordinate FMN. Positions 352, 355, 358, and 371 each coordinate [4Fe-4S] cluster. An ADP-binding site is contributed by 398–427 (DVLIVGAGPAGSECARVLMERGYTVHLVDT).

It in the N-terminal section; belongs to the NADH:flavin oxidoreductase/NADH oxidase family. FMN is required as a cofactor. The cofactor is [4Fe-4S] cluster.

The enzyme catalyses dimethylamine + oxidized [electron-transfer flavoprotein] + H2O + H(+) = methylamine + reduced [electron-transfer flavoprotein] + formaldehyde. This Hyphomicrobium sp. (strain x) protein is Dimethylamine dehydrogenase (dmd).